The primary structure comprises 444 residues: MMWIQKNPFLGLLLCSFLAFFQSTYAEVGKLVCFYDAQSFVREGPAQMSLAELEPALQFCNFLVYGYAGIDAVTYKIKSLDPSLTNDRQHYRHITALRKKYPHVRFLLSVGGDRDVNSEGVADSDKYLRLLEQSEHRKSFQASVLAELNNNGFDGIDLAWQFPKNRPKLQQGVFKRVWGSLRGWFSSSSVDEKSEEHREQFATLLEELQSDLRRGGQLLTVSMLPHVSAELFIDVPKVLSNVDFVNLGTYDFQTPERDPKVADLPTPLYAMYDRDPSHNVQYQVQYWMNQTSEISVHKLHVGVTSYGRAWNMTRNSGITGYPPIPAANGAAPPGRQTVTPGLLSWPEICDLLQQQPQDREVPHLRKVGDPTKRFGIYAYRAADDQGENGLWVGYEDPLTAAIKAGFVHAQGLGGVAFHDLSMDDFRGQCAGEKFPILRSIKFKL.

An N-terminal signal peptide occupies residues 1–26 (MMWIQKNPFLGLLLCSFLAFFQSTYA). The region spanning 29–444 (GKLVCFYDAQ…PILRSIKFKL (416 aa)) is the GH18 domain. A disulfide bridge links C33 with C60. N289 and N311 each carry an N-linked (GlcNAc...) asparagine glycan. An intrachain disulfide couples C349 to C429.

It belongs to the glycosyl hydrolase 18 family. IDGF subfamily. Glycosylated.

It localises to the secreted. Probably required to stimulate the proliferation, polarization and motility of imaginal disk cells. May act by stabilizing the binding of insulin-like peptides to its receptor through a simultaneous interaction with both molecules to form a multiprotein signaling complex. This is Chitinase-like protein Idgf5 (Idgf5) from Drosophila melanogaster (Fruit fly).